Consider the following 194-residue polypeptide: Factor in the germline alpha (194 aa).

The 53-residue stretch at 59–111 (ERRRVANAKERERIKNLNRGFAKLKALVPFLPQSRKPSKVDILKGATEYIQIL) folds into the bHLH domain. Over residues 121–137 (SEKQSPEEQTHSGRPSD) the composition is skewed to basic and acidic residues. Positions 121-163 (SEKQSPEEQTHSGRPSDPHVSSTRELLGNATQPTSCASGLKKE) are disordered. Polar residues predominate over residues 139–157 (HVSSTRELLGNATQPTSCA).

As to quaternary structure, heterodimer with TCF3/isoform E12. In terms of tissue distribution, expressed only in the oocytes within the ovary and at lower level in the testis. Found in the resting oocytes of the primordial follicle cells, at the periphery of the ovary and in the hilar region. Also detected in growing oocytes, but at lower levels.

The protein resides in the nucleus. Functionally, germ-line specific transcription factor implicated in postnatal oocyte-specific gene expression. Plays a key regulatory role in the expression of multiple oocyte-specific genes, including those that initiate folliculogenesis and those that encode the zona pellucida (ZP1, ZP2 and ZP3) required for fertilization and early embryonic survival. Essential for oocytes to survive and form primordial follicles. The persistence of FIGLA in adult females suggests that it may regulate additional pathways that are essential for normal ovarian development. Binds to the E-box (5'-CANNTG-3') of the ZPs (ZP1, ZP2, ZP3) promoters. The protein is Factor in the germline alpha (Figla) of Mus musculus (Mouse).